A 452-amino-acid polypeptide reads, in one-letter code: Phosphoglucosamine mutase (452 aa).

S112 acts as the Phosphoserine intermediate in catalysis. Mg(2+)-binding residues include S112, D251, D253, and D255. S112 is subject to Phosphoserine.

It belongs to the phosphohexose mutase family. Requires Mg(2+) as cofactor. Post-translationally, activated by phosphorylation.

It carries out the reaction alpha-D-glucosamine 1-phosphate = D-glucosamine 6-phosphate. In terms of biological role, catalyzes the conversion of glucosamine-6-phosphate to glucosamine-1-phosphate. In Bordetella pertussis (strain Tohama I / ATCC BAA-589 / NCTC 13251), this protein is Phosphoglucosamine mutase.